The following is a 3469-amino-acid chain: Abnormal spindle-like microcephaly-associated protein homolog (3469 aa).

The tract at residues 1 to 24 (MATRRAGRSWEVSPSGPRPAAGEA) is disordered. A compositionally biased stretch (low complexity) spans 13 to 24 (SPSGPRPAAGEA). Phosphoserine occurs at positions 273, 276, 361, 386, 420, and 599. Residues 913 to 1049 (KTSKDILLAF…LLWKIAFAFQ (137 aa)) form the Calponin-homology (CH) 1 domain. Positions 1050 to 1069 (VDISLNLDQLKEEIDFLKHT) form a coiled coil. Serine 1095 bears the Phosphoserine mark. In terms of domain architecture, Calponin-homology (CH) 2 spans 1102 to 1253 (SESIKLLMEW…YLSFLCSRLL (152 aa)). 38 consecutive IQ domains span residues 1258–1287 (ETRA…QDKA), 1339–1370 (QNES…IILQ), 1385–1414 (YLWA…MLKS), 1529–1560 (KRAA…VLQS), 1574–1605 (LKKI…LVIQ), 1624–1653 (TRSA…SIIK), 1647–1676 (ILTS…ATVK), 1720–1749 (MRES…AAIS), 1743–1774 (QRQA…LVIQ), 1793–1822 (VKRA…AALK), 1816–1845 (QSIA…STIK), 1866–1895 (TRAA…AAVR), 1889–1920 (ERQA…LVIQ), 1939–1970 (LREA…VIIQ), 1962–1993 (QHKC…RLIQ), 2012–2041 (TKAA…AAVT), 2035–2066 (CNRA…IIIQ), 2085–2116 (LKKT…TVIQ), 2108–2139 (LHMA…VIIQ), 2158–2189 (IMKA…TLIQ), 2181–2210 (MQSA…VTRT), 2231–2262 (LRHS…TLIQ), 2304–2333 (VQKA…AATA), 2327–2358 (VHRA…VVIQ), 2377–2408 (QRHS…TLIQ), 2400–2431 (MHSS…VFVQ), 2450–2481 (LKKA…VLIQ), 2523–2554 (QRRS…IIIQ), 2681–2712 (RHLA…AVIQ), 2731–2762 (VQKS…MVAS), 2851–2882 (QKRA…VVLQ), 2901–2930 (IRSS…STIK), 2924–2955 (IKDS…KIQA), 2946–2977 (QVKA…KIIQ), 3021–3050 (RHQA…AALT), 3071–3102 (LKKS…RLLH), 3173–3202 (QNRA…AISR), and 3196–3227 (FNNA…IRLS).

It is found in the cytoplasm. The protein localises to the cytoskeleton. The protein resides in the spindle. It localises to the nucleus. Its function is as follows. Probable role in mitotic spindle regulation and coordination of mitotic processes. May have a preferential role in regulating neurogenesis. The polypeptide is Abnormal spindle-like microcephaly-associated protein homolog (ASPM) (Canis lupus familiaris (Dog)).